We begin with the raw amino-acid sequence, 823 residues long: Translation initiation factor IF-2 (823 aa).

Disordered regions lie at residues 30 to 66 (VPPS…DDKR) and 156 to 192 (TPSH…IKKV). Polar residues predominate over residues 36-48 (RGTSTGKSFTTVE). Positions 56–66 (PGEYISHDDKR) are enriched in basic and acidic residues. A tr-type G domain is found at 322 to 491 (PRPPVVTVMG…LLLAEMLELS (170 aa)). A G1 region spans residues 331–338 (GHVDHGKT). GTP is bound at residue 331–338 (GHVDHGKT). The interval 356–360 (GITQH) is G2. Positions 377–380 (DTPG) are G3. GTP is bound by residues 377–381 (DTPGH) and 431–434 (NKID). The segment at 431-434 (NKID) is G4. Residues 467–469 (SAK) are G5.

Belongs to the TRAFAC class translation factor GTPase superfamily. Classic translation factor GTPase family. IF-2 subfamily.

The protein resides in the cytoplasm. Its function is as follows. One of the essential components for the initiation of protein synthesis. Protects formylmethionyl-tRNA from spontaneous hydrolysis and promotes its binding to the 30S ribosomal subunits. Also involved in the hydrolysis of GTP during the formation of the 70S ribosomal complex. This is Translation initiation factor IF-2 from Anaplasma phagocytophilum (strain HZ).